We begin with the raw amino-acid sequence, 354 residues long: Uroporphyrinogen decarboxylase (354 aa).

Residues 27 to 31, Asp-77, Tyr-154, Thr-209, and His-327 each bind substrate; that span reads RQAGR.

This sequence belongs to the uroporphyrinogen decarboxylase family. As to quaternary structure, homodimer.

The protein resides in the cytoplasm. It carries out the reaction uroporphyrinogen III + 4 H(+) = coproporphyrinogen III + 4 CO2. It functions in the pathway porphyrin-containing compound metabolism; protoporphyrin-IX biosynthesis; coproporphyrinogen-III from 5-aminolevulinate: step 4/4. Functionally, catalyzes the decarboxylation of four acetate groups of uroporphyrinogen-III to yield coproporphyrinogen-III. This Pseudomonas putida (strain GB-1) protein is Uroporphyrinogen decarboxylase.